Here is a 357-residue protein sequence, read N- to C-terminus: Dehydrogenase FUB6 (357 aa).

It belongs to the zinc-containing alcohol dehydrogenase family. Quinone oxidoreductase subfamily.

Its pathway is mycotoxin biosynthesis. Dehydrogenase; part of the gene cluster that mediates the biosynthesis of fusaric acid, a mycotoxin with low to moderate toxicity to animals and humans, but with high phytotoxic properties. L-aspartate is suggested as fusaric acid amino acid precursor that is activated and further processed to O-acetyl-L-homoserine by cluster enzymes aspartate kinase FUB3 and homoserine O-acetyltransferase FUB5, as well as enzymes of the primary metabolism. The polyketide synthase (PKS) FUB1 generates the triketide trans-2-hexenal which is presumptively released by the hydrolase FUB4 and linked to the NRPS-bound amino acid precursor by NAD(P)-dependent dehydrogenase FUB6. FUB1, FUB4, and the non-canonical NRPS Fub8 may form an enzyme complex. Further processing of the NRPS-bound intermediate might be carried out by FUB6 and the O-acetylhomoserine FUB7, enabling a spontaneous electrocyclization to close the carbon backbone of fusaric acid. Dihydrofusaric acid is likely to be released via reduction by the thioester reductase (TR) domain of FUB8 whereupon the final oxidation to fusaric acid may (also) be performed by the FMN-dependent dehydrogenase FUB9. This is Dehydrogenase FUB6 from Gibberella moniliformis (strain M3125 / FGSC 7600) (Maize ear and stalk rot fungus).